Reading from the N-terminus, the 306-residue chain is UDP-3-O-acyl-N-acetylglucosamine deacetylase (306 aa).

Residues H79, H238, and D242 each coordinate Zn(2+). The active-site Proton donor is H265.

This sequence belongs to the LpxC family. Zn(2+) serves as cofactor.

It catalyses the reaction a UDP-3-O-[(3R)-3-hydroxyacyl]-N-acetyl-alpha-D-glucosamine + H2O = a UDP-3-O-[(3R)-3-hydroxyacyl]-alpha-D-glucosamine + acetate. It functions in the pathway glycolipid biosynthesis; lipid IV(A) biosynthesis; lipid IV(A) from (3R)-3-hydroxytetradecanoyl-[acyl-carrier-protein] and UDP-N-acetyl-alpha-D-glucosamine: step 2/6. Catalyzes the hydrolysis of UDP-3-O-myristoyl-N-acetylglucosamine to form UDP-3-O-myristoylglucosamine and acetate, the committed step in lipid A biosynthesis. The protein is UDP-3-O-acyl-N-acetylglucosamine deacetylase of Shewanella sediminis (strain HAW-EB3).